The sequence spans 251 residues: Imidazole glycerol phosphate synthase subunit HisF (251 aa).

Residues D11 and D130 contribute to the active site.

It belongs to the HisA/HisF family. In terms of assembly, heterodimer of HisH and HisF.

The protein resides in the cytoplasm. The catalysed reaction is 5-[(5-phospho-1-deoxy-D-ribulos-1-ylimino)methylamino]-1-(5-phospho-beta-D-ribosyl)imidazole-4-carboxamide + L-glutamine = D-erythro-1-(imidazol-4-yl)glycerol 3-phosphate + 5-amino-1-(5-phospho-beta-D-ribosyl)imidazole-4-carboxamide + L-glutamate + H(+). It functions in the pathway amino-acid biosynthesis; L-histidine biosynthesis; L-histidine from 5-phospho-alpha-D-ribose 1-diphosphate: step 5/9. Its function is as follows. IGPS catalyzes the conversion of PRFAR and glutamine to IGP, AICAR and glutamate. The HisF subunit catalyzes the cyclization activity that produces IGP and AICAR from PRFAR using the ammonia provided by the HisH subunit. In Phocaeicola vulgatus (strain ATCC 8482 / DSM 1447 / JCM 5826 / CCUG 4940 / NBRC 14291 / NCTC 11154) (Bacteroides vulgatus), this protein is Imidazole glycerol phosphate synthase subunit HisF.